A 135-amino-acid chain; its full sequence is MKPSERRKARRLAVQAIYSWQLSGNNIADVEHEFLTEQDVAGVDIAYFRELLGGVATKKSQLDELITPFLTRPLDEVDPVEKAIVRIATYELTFRKDVPYKVAINEAIELAKAFGAEDGHKFVNGILDKLVARNR.

This sequence belongs to the NusB family.

Involved in transcription antitermination. Required for transcription of ribosomal RNA (rRNA) genes. Binds specifically to the boxA antiterminator sequence of the ribosomal RNA (rrn) operons. The sequence is that of Transcription antitermination protein NusB from Shewanella halifaxensis (strain HAW-EB4).